Here is a 102-residue protein sequence, read N- to C-terminus: Small ribosomal subunit protein uS14 (102 aa).

Belongs to the universal ribosomal protein uS14 family. Part of the 30S ribosomal subunit. Contacts proteins S3 and S10.

Binds 16S rRNA, required for the assembly of 30S particles and may also be responsible for determining the conformation of the 16S rRNA at the A site. This is Small ribosomal subunit protein uS14 from Dichelobacter nodosus (strain VCS1703A).